Reading from the N-terminus, the 462-residue chain is MSAEPHHLYSQLPAIDSLLRAPEMAPLLDEYGAALLTENLRLMQAEAREYIRQFHTLADWCADWPAALRHRLNQRQPALKPVFNLSGTVLHTNLGRAPLAESAIAAVTDAMRGAVTLEYSLSGAGRGHRDRAVADLLCELTGAEDACIVNNNAAAVFLMLTVMAAGKQVVVSRGELVEIGGAFRIPDVMRQAGCELVEVGTTNRTHLKDYRQAISEHTGLLMKVHTSNYSIEGFTASVAEQQLAALGHEFAIPTATDLGSGSLVDMTRYGLPAEPMPQQLIAAGVDLVTFSGDKLLGGPQAGIILGKKQWIDQLQQHPLKRVLRADKMTLAALDATLRLYQQPDRLTELLPTMRLLTRPAQDIAESAQRVLAALNGSYAADFTLAVESCWSQIGSGSLPVDRLPSWAVTFTPKDGSGSALEALTVRWRGLAKPIIGRVADGRLWLDLRCLEDEAALLRELAP.

N6-(pyridoxal phosphate)lysine is present on Lys-294.

This sequence belongs to the SelA family. As to quaternary structure, homodecamer; pentamer of dimers. Binds only one seryl-tRNA(Sec) per dimer. Pyridoxal 5'-phosphate serves as cofactor.

It localises to the cytoplasm. The catalysed reaction is L-seryl-tRNA(Sec) + selenophosphate + H(+) = L-selenocysteinyl-tRNA(Sec) + phosphate. It participates in aminoacyl-tRNA biosynthesis; selenocysteinyl-tRNA(Sec) biosynthesis; selenocysteinyl-tRNA(Sec) from L-seryl-tRNA(Sec) (bacterial route): step 1/1. Its function is as follows. Converts seryl-tRNA(Sec) to selenocysteinyl-tRNA(Sec) required for selenoprotein biosynthesis. The protein is L-seryl-tRNA(Sec) selenium transferase of Yersinia enterocolitica serotype O:8 / biotype 1B (strain NCTC 13174 / 8081).